Here is a 364-residue protein sequence, read N- to C-terminus: Protein trichome birefringence-like 40 (364 aa).

Residues 9 to 25 (LASLSLILFSSFPGLLA) form a helical; Signal-anchor for type II membrane protein membrane-spanning segment. Residues 118 to 120 (GDS) carry the GDS motif motif. Positions 341 to 355 (DCSHWCLPGLPDTWN) match the DCXHWCLPGXXDXWN motif motif.

The protein belongs to the PC-esterase family. TBL subfamily.

Its subcellular location is the membrane. In terms of biological role, may act as a bridging protein that binds pectin and other cell wall polysaccharides. Probably involved in maintaining esterification of pectins. May be involved in the specific O-acetylation of cell wall polymers. The polypeptide is Protein trichome birefringence-like 40 (TBL40) (Arabidopsis thaliana (Mouse-ear cress)).